The primary structure comprises 149 residues: Large ribosomal subunit protein uL16c (149 aa).

This sequence belongs to the universal ribosomal protein uL16 family. Part of the 50S ribosomal subunit.

Its subcellular location is the plastid. It is found in the organellar chromatophore. This Paulinella chromatophora protein is Large ribosomal subunit protein uL16c (rpl16).